Reading from the N-terminus, the 116-residue chain is NADH-quinone oxidoreductase subunit A (116 aa).

3 helical membrane-spanning segments follow: residues F3–L23, F61–I81, and Q88–W108.

It belongs to the complex I subunit 3 family. In terms of assembly, NDH-1 is composed of 14 different subunits. Subunits NuoA, H, J, K, L, M, N constitute the membrane sector of the complex.

It localises to the cell inner membrane. The catalysed reaction is a quinone + NADH + 5 H(+)(in) = a quinol + NAD(+) + 4 H(+)(out). Functionally, NDH-1 shuttles electrons from NADH, via FMN and iron-sulfur (Fe-S) centers, to quinones in the respiratory chain. The immediate electron acceptor for the enzyme in this species is believed to be a menaquinone. Couples the redox reaction to proton translocation (for every two electrons transferred, four hydrogen ions are translocated across the cytoplasmic membrane), and thus conserves the redox energy in a proton gradient. This chain is NADH-quinone oxidoreductase subunit A, found in Bacteroides fragilis (strain ATCC 25285 / DSM 2151 / CCUG 4856 / JCM 11019 / LMG 10263 / NCTC 9343 / Onslow / VPI 2553 / EN-2).